A 192-amino-acid polypeptide reads, in one-letter code: Large ribosomal subunit protein bL9 (192 aa).

Residues 172–192 (DALRPEDFFDPEADGIDEDEA) are disordered. Residues 179-192 (FFDPEADGIDEDEA) are compositionally biased toward acidic residues.

Belongs to the bacterial ribosomal protein bL9 family.

Binds to the 23S rRNA. This is Large ribosomal subunit protein bL9 from Rhizobium etli (strain CIAT 652).